Reading from the N-terminus, the 419-residue chain is CinA-like protein (419 aa).

This sequence belongs to the CinA family.

This is CinA-like protein from Picosynechococcus sp. (strain ATCC 27264 / PCC 7002 / PR-6) (Agmenellum quadruplicatum).